We begin with the raw amino-acid sequence, 429 residues long: Adenylosuccinate synthetase (429 aa).

GTP-binding positions include Gly-12–Lys-18 and Gly-40–Thr-42. Asp-13 functions as the Proton acceptor in the catalytic mechanism. Asp-13 and Gly-40 together coordinate Mg(2+). IMP is bound by residues Asp-13–Lys-16, Asn-38–His-41, Thr-129, Arg-143, Gln-223, Thr-238, and Arg-302. His-41 (proton donor) is an active-site residue. Val-298 to Arg-304 provides a ligand contact to substrate. GTP is bound by residues Arg-304, Lys-330–Asp-332, and Ser-412–Ser-414.

This sequence belongs to the adenylosuccinate synthetase family. As to quaternary structure, homodimer. Mg(2+) serves as cofactor.

The protein resides in the cytoplasm. It catalyses the reaction IMP + L-aspartate + GTP = N(6)-(1,2-dicarboxyethyl)-AMP + GDP + phosphate + 2 H(+). It functions in the pathway purine metabolism; AMP biosynthesis via de novo pathway; AMP from IMP: step 1/2. In terms of biological role, plays an important role in the de novo pathway of purine nucleotide biosynthesis. Catalyzes the first committed step in the biosynthesis of AMP from IMP. This Bartonella bacilliformis (strain ATCC 35685 / KC583 / Herrer 020/F12,63) protein is Adenylosuccinate synthetase.